Here is a 572-residue protein sequence, read N- to C-terminus: Phosphoenolpyruvate-protein phosphotransferase (572 aa).

His-190 serves as the catalytic Tele-phosphohistidine intermediate. Arg-297 and Arg-333 together coordinate phosphoenolpyruvate. Mg(2+) is bound by residues Glu-432 and Asp-456. Phosphoenolpyruvate contacts are provided by residues 455–456 (ND) and Arg-466. The active-site Proton donor is the Cys-503.

The protein belongs to the PEP-utilizing enzyme family. As to quaternary structure, homodimer. Mg(2+) is required as a cofactor.

It is found in the cytoplasm. It catalyses the reaction L-histidyl-[protein] + phosphoenolpyruvate = N(pros)-phospho-L-histidyl-[protein] + pyruvate. Functionally, general (non sugar-specific) component of the phosphoenolpyruvate-dependent sugar phosphotransferase system (sugar PTS). This major carbohydrate active-transport system catalyzes the phosphorylation of incoming sugar substrates concomitantly with their translocation across the cell membrane. Enzyme I transfers the phosphoryl group from phosphoenolpyruvate (PEP) to the phosphoryl carrier protein (HPr). The sequence is that of Phosphoenolpyruvate-protein phosphotransferase (ptsI) from Listeria monocytogenes serovar 1/2a (strain ATCC BAA-679 / EGD-e).